We begin with the raw amino-acid sequence, 239 residues long: tRNA (guanine-N(7)-)-methyltransferase (239 aa).

S-adenosyl-L-methionine contacts are provided by Glu-69, Glu-94, Asp-121, and Asp-144. Residue Asp-144 is part of the active site. Lys-148 is a binding site for substrate. Residues 150–155 (RHNKRR) form an interaction with RNA region. Residues Asp-180 and 217-220 (TKFE) contribute to the substrate site.

It belongs to the class I-like SAM-binding methyltransferase superfamily. TrmB family. Monomer.

The enzyme catalyses guanosine(46) in tRNA + S-adenosyl-L-methionine = N(7)-methylguanosine(46) in tRNA + S-adenosyl-L-homocysteine. It participates in tRNA modification; N(7)-methylguanine-tRNA biosynthesis. Its function is as follows. Catalyzes the formation of N(7)-methylguanine at position 46 (m7G46) in tRNA. This Shigella dysenteriae serotype 1 (strain Sd197) protein is tRNA (guanine-N(7)-)-methyltransferase.